The primary structure comprises 398 residues: uncharacterized protein (398 aa).

Residues 235-351 enclose the CobW C-terminal domain; it reads VAIVEFSARR…DIVNALNAAL (117 aa).

This is an uncharacterized protein from Mycobacterium bovis (strain ATCC BAA-935 / AF2122/97).